Consider the following 369-residue polypeptide: MRVIVTGGGTGGHIYPALAIAKGILAQRPDAEILYIGTREGMEARLVPEAGIEFSGVSGQGLPRKLSLETLKVGGKSFKALWETKQILKKFKPDLVVGTGGYVAGPVVLTAALFGIPTLLHEQNALPGITNKILTRFVRKVMVTFPESIAHFGVQKKLVLTGLPVRAEIGNISREKGAEDLGLRSDCLTLLVTGGSRGARSINQAMPTVLKHLAGRKDIQVIWATGKATYQETLENLKAQGIQWQRENWRVLEYLKDMPEALACADLFVGRAGATTLAEIMVAGKPGILIPYPLAAENHQEFNARALEKDGAACVILDQDLTGENLWALVQGLLEKPEKLRKMAQAARGLGQPDALNKIVNVCLDTAWK.

Residues 10–12 (TGG), asparagine 124, arginine 166, serine 196, and glutamine 300 each bind UDP-N-acetyl-alpha-D-glucosamine.

The protein belongs to the glycosyltransferase 28 family. MurG subfamily.

The protein localises to the cell membrane. The enzyme catalyses di-trans,octa-cis-undecaprenyl diphospho-N-acetyl-alpha-D-muramoyl-L-alanyl-D-glutamyl-meso-2,6-diaminopimeloyl-D-alanyl-D-alanine + UDP-N-acetyl-alpha-D-glucosamine = di-trans,octa-cis-undecaprenyl diphospho-[N-acetyl-alpha-D-glucosaminyl-(1-&gt;4)]-N-acetyl-alpha-D-muramoyl-L-alanyl-D-glutamyl-meso-2,6-diaminopimeloyl-D-alanyl-D-alanine + UDP + H(+). It participates in cell wall biogenesis; peptidoglycan biosynthesis. Its function is as follows. Cell wall formation. Catalyzes the transfer of a GlcNAc subunit on undecaprenyl-pyrophosphoryl-MurNAc-pentapeptide (lipid intermediate I) to form undecaprenyl-pyrophosphoryl-MurNAc-(pentapeptide)GlcNAc (lipid intermediate II). The sequence is that of UDP-N-acetylglucosamine--N-acetylmuramyl-(pentapeptide) pyrophosphoryl-undecaprenol N-acetylglucosamine transferase from Desulfitobacterium hafniense (strain Y51).